The sequence spans 413 residues: Glutaminase (413 aa).

The glutaminase stretch occupies residues 23-307 (GELADYIPEL…LSDDMGLHLM (285 aa)). Substrate is bound by residues Ser-65, Asn-114, Glu-160, Asn-167, Tyr-191, Tyr-243, and Val-261. The STAS domain occupies 316–413 (AVRSITRDGD…SDGTICKERV (98 aa)).

It belongs to the glutaminase family. Homotetramer.

The enzyme catalyses L-glutamine + H2O = L-glutamate + NH4(+). The sequence is that of Glutaminase (glsA) from Corynebacterium glutamicum (strain ATCC 13032 / DSM 20300 / JCM 1318 / BCRC 11384 / CCUG 27702 / LMG 3730 / NBRC 12168 / NCIMB 10025 / NRRL B-2784 / 534).